The sequence spans 880 residues: Valine--tRNA ligase (880 aa).

A 'HIGH' region motif is present at residues 48–58 (PNVTGKLHLGH). The 'KMSKS' region signature appears at 524–528 (KMSKS). K527 is an ATP binding site. Positions 808-879 (LAGLINIEEE…VKERIAQLRS (72 aa)) form a coiled coil.

This sequence belongs to the class-I aminoacyl-tRNA synthetase family. ValS type 1 subfamily. In terms of assembly, monomer.

It is found in the cytoplasm. It carries out the reaction tRNA(Val) + L-valine + ATP = L-valyl-tRNA(Val) + AMP + diphosphate. In terms of biological role, catalyzes the attachment of valine to tRNA(Val). As ValRS can inadvertently accommodate and process structurally similar amino acids such as threonine, to avoid such errors, it has a 'posttransfer' editing activity that hydrolyzes mischarged Thr-tRNA(Val) in a tRNA-dependent manner. This Enterococcus faecalis (strain ATCC 700802 / V583) protein is Valine--tRNA ligase.